Reading from the N-terminus, the 1302-residue chain is Vascular endothelial growth factor receptor kdr-like (1302 aa).

The first 28 residues, 1-28 (MTPLKTSVKAFFTLHVLFSCISHGLVEG), serve as a signal peptide directing secretion. Residues 29-740 (SRLPDPQLLP…GEDGKPNIEV (712 aa)) are Extracellular-facing. Ig-like C2-type domains lie at 34 to 115 (PQLL…HEVS), 143 to 206 (DPYF…VDNA), 222 to 318 (KNLA…TKVI), 326 to 412 (NVTH…ISYK), 419 to 542 (PKIF…FYVD), 545 to 636 (PQPF…SALT), and 643 to 728 (PWLM…AVIT). Intrachain disulfides connect cysteine 55-cysteine 104 and cysteine 150-cysteine 199. Asparagine 69 and asparagine 97 each carry an N-linked (GlcNAc...) asparagine glycan. Asparagine 242, asparagine 265, asparagine 291, asparagine 326, asparagine 370, asparagine 380, asparagine 408, asparagine 453, asparagine 466, asparagine 505, asparagine 517, asparagine 532, asparagine 607, asparagine 611, asparagine 630, asparagine 648, and asparagine 655 each carry an N-linked (GlcNAc...) asparagine glycan. Cysteine 243 and cysteine 302 are disulfide-bonded. Cysteine 444 and cysteine 524 are disulfide-bonded. Cysteine 565 and cysteine 618 are joined by a disulfide. Residues cysteine 664 and cysteine 712 are joined by a disulfide bond. A helical membrane pass occupies residues 741–761 (IILVSTGAAATFLWIMLILFI). Residues 762–1302 (RKLRKPSSAD…YVVRYSTPPV (541 aa)) lie on the Cytoplasmic side of the membrane. Residues 809–1139 (LRLGKTLGHG…ELVERLGDLL (331 aa)) enclose the Protein kinase domain. ATP is bound by residues 815–823 (LGHGAFGKV) and lysine 843. The active-site Proton acceptor is aspartate 1003. Phosphotyrosine; by autocatalysis is present on residues tyrosine 1029, tyrosine 1034, and tyrosine 1150. Disordered regions lie at residues 1159-1179 (TKAD…PVSL) and 1266-1292 (PLVP…PDYN). Polar residues predominate over residues 1162–1176 (DPSNQSPTEETSTRP).

It belongs to the protein kinase superfamily. Tyr protein kinase family. CSF-1/PDGF receptor subfamily. As to quaternary structure, interacts with isoform VEGF165 of vegfaa and isoform VEGF171 of vegfab. In terms of processing, phosphorylated and activated by vegfaa and vegfab. In terms of tissue distribution, first expressed in embryos between 5- and 7-somites. At 7 somites, expressed in discrete bilateral stripes both anteriorly and posteriorly, and in a transverse ectodermal stripe in the hindbrain. From 7-somites, expression seems to extend caudally from the head, and in both directions in the trunk region, until by 20-somites, expression is detected as a continuous band from the anterior head region to the tailbud. Concurrently, cells expressing kdrl in the mid- and posterior trunk regions converge medially. By 24 hours post-fertilization (hpf), expressed in all the endothelial cells lining the vasculature.

The protein resides in the cell membrane. The catalysed reaction is L-tyrosyl-[protein] + ATP = O-phospho-L-tyrosyl-[protein] + ADP + H(+). In terms of biological role, receptor for VEGF or VEGFC. Has a tyrosine-protein kinase activity. Combinations of multiple VEGF receptors are required for development of different blood vessel types in the embryo. Involved in angiogenesis, specifically in VEGF-induced sprouting of new blood vessels. Particularly involved in artery formation. Does not appear to be required for hematopoiesis. The protein is Vascular endothelial growth factor receptor kdr-like (kdrl) of Danio rerio (Zebrafish).